A 377-amino-acid polypeptide reads, in one-letter code: D-alanine--D-alanine ligase (377 aa).

The ATP-grasp domain occupies 140-349 (KELLTVNGIR…NAKLVDMLID (210 aa)). 170 to 225 (VAELGNIVFVKAANQGSSVGISRVTNAEEYTEALSDSFQYDYKVLIEEAVNGAREL) lines the ATP pocket. Positions 303, 316, and 318 each coordinate Mg(2+).

The protein belongs to the D-alanine--D-alanine ligase family. The cofactor is Mg(2+). Requires Mn(2+) as cofactor.

The protein resides in the cytoplasm. The catalysed reaction is 2 D-alanine + ATP = D-alanyl-D-alanine + ADP + phosphate + H(+). The protein operates within cell wall biogenesis; peptidoglycan biosynthesis. Cell wall formation. This Leuconostoc mesenteroides subsp. mesenteroides (strain ATCC 8293 / DSM 20343 / BCRC 11652 / CCM 1803 / JCM 6124 / NCDO 523 / NBRC 100496 / NCIMB 8023 / NCTC 12954 / NRRL B-1118 / 37Y) protein is D-alanine--D-alanine ligase.